An 894-amino-acid polypeptide reads, in one-letter code: Exocyst complex component 1 (894 aa).

Coiled coils occupy residues 152–199 and 205–259; these read GDEE…LQVL and QSIM…NHLI. The segment at 437–495 is disordered; that stretch reads SKESKKFATLPRKESAVKQETESLHGSSGKLTGSTSSLNKLSVQSSGSRRSQSSSLLDM. Residues 438 to 459 show a composition bias toward basic and acidic residues; that stretch reads KESKKFATLPRKESAVKQETES. Low complexity predominate over residues 460 to 491; that stretch reads LHGSSGKLTGSTSSLNKLSVQSSGSRRSQSSS. S470 bears the Phosphoserine mark. T471 is modified (phosphothreonine). 3 positions are modified to phosphoserine: S473, S487, and S501.

It belongs to the SEC3 family. The exocyst complex is composed of EXOC1, EXOC2, EXOC3, EXOC4, EXOC5, EXOC6, EXOC7 and EXOC8. Interacts with EEF1A1. Interacts with SLC6A9; interaction increases the transporter capacity of SLC6A9 probably by promoting its insertion into the cell membrane.

It is found in the midbody. The protein resides in the midbody ring. The protein localises to the cytoplasm. Its subcellular location is the perinuclear region. It localises to the cell membrane. In terms of biological role, component of the exocyst complex involved in the docking of exocytic vesicles with fusion sites on the plasma membrane. The sequence is that of Exocyst complex component 1 (Exoc1) from Mus musculus (Mouse).